The chain runs to 308 residues: Glutaminase (308 aa).

Serine 66, asparagine 117, glutamate 161, asparagine 168, tyrosine 192, tyrosine 244, and valine 262 together coordinate substrate.

This sequence belongs to the glutaminase family. Homotetramer.

It carries out the reaction L-glutamine + H2O = L-glutamate + NH4(+). The chain is Glutaminase from Klebsiella pneumoniae (strain 342).